A 122-amino-acid chain; its full sequence is MIQMQTNLDVADNSGARRVMCIKVLGGSKRKYAGVGDIIVVSVKEAIPRGRVKKGDVMKAVVVRTAKDIKRADGSVIRFDTNAAVLINNQSEPVGTRIFGPVPRELRAKNHMKIISLAPEVL.

The protein belongs to the universal ribosomal protein uL14 family. Part of the 50S ribosomal subunit. Forms a cluster with proteins L3 and L19. In the 70S ribosome, L14 and L19 interact and together make contacts with the 16S rRNA in bridges B5 and B8.

Binds to 23S rRNA. Forms part of two intersubunit bridges in the 70S ribosome. The chain is Large ribosomal subunit protein uL14 from Beijerinckia indica subsp. indica (strain ATCC 9039 / DSM 1715 / NCIMB 8712).